Here is a 349-residue protein sequence, read N- to C-terminus: Hydroxymethylglutaryl-CoA synthase (349 aa).

Residues aspartate 29 and alanine 30 each contribute to the (3S)-3-hydroxy-3-methylglutaryl-CoA site. The Proton donor/acceptor role is filled by glutamate 81. Residues cysteine 113 and threonine 154 each coordinate (3S)-3-hydroxy-3-methylglutaryl-CoA. Cysteine 113 acts as the Acyl-thioester intermediate in catalysis. Arginine 202 is a binding site for CoA. Residues threonine 204 and histidine 237 each coordinate (3S)-3-hydroxy-3-methylglutaryl-CoA. The active-site Proton donor/acceptor is histidine 237. Lysine 242 contacts CoA. The (3S)-3-hydroxy-3-methylglutaryl-CoA site is built by lysine 246, asparagine 269, and serine 299.

Belongs to the thiolase-like superfamily. Archaeal HMG-CoA synthase family. Interacts with acetoacetyl-CoA thiolase that catalyzes the precedent step in the pathway and with a DUF35 protein. The acetoacetyl-CoA thiolase/HMG-CoA synthase complex channels the intermediate via a fused CoA-binding site, which allows for efficient coupling of the endergonic thiolase reaction with the exergonic HMGCS reaction.

It carries out the reaction acetoacetyl-CoA + acetyl-CoA + H2O = (3S)-3-hydroxy-3-methylglutaryl-CoA + CoA + H(+). It participates in metabolic intermediate biosynthesis; (R)-mevalonate biosynthesis; (R)-mevalonate from acetyl-CoA: step 2/3. Catalyzes the condensation of acetyl-CoA with acetoacetyl-CoA to form 3-hydroxy-3-methylglutaryl-CoA (HMG-CoA). Functions in the mevalonate (MVA) pathway leading to isopentenyl diphosphate (IPP), a key precursor for the biosynthesis of isoprenoid compounds that are building blocks of archaeal membrane lipids. The chain is Hydroxymethylglutaryl-CoA synthase from Methanosarcina acetivorans (strain ATCC 35395 / DSM 2834 / JCM 12185 / C2A).